Reading from the N-terminus, the 61-residue chain is Photosystem II reaction center protein K (61 aa).

A propeptide spanning residues 1–24 is cleaved from the precursor; sequence MLNIFNLVCICIHSVLYSSSFFSA. A helical membrane pass occupies residues 36–56; it reads IVDIMPVIPLLFFLLAFVWQA.

This sequence belongs to the PsbK family. As to quaternary structure, PSII is composed of 1 copy each of membrane proteins PsbA, PsbB, PsbC, PsbD, PsbE, PsbF, PsbH, PsbI, PsbJ, PsbK, PsbL, PsbM, PsbT, PsbX, PsbY, PsbZ, Psb30/Ycf12, at least 3 peripheral proteins of the oxygen-evolving complex and a large number of cofactors. It forms dimeric complexes.

It localises to the plastid. The protein resides in the chloroplast thylakoid membrane. Functionally, one of the components of the core complex of photosystem II (PSII). PSII is a light-driven water:plastoquinone oxidoreductase that uses light energy to abstract electrons from H(2)O, generating O(2) and a proton gradient subsequently used for ATP formation. It consists of a core antenna complex that captures photons, and an electron transfer chain that converts photonic excitation into a charge separation. This is Photosystem II reaction center protein K from Glycine max (Soybean).